The chain runs to 473 residues: LETM1 domain-containing protein mdm28, mitochondrial (473 aa).

The N-terminal 73 residues, 1 to 73 (MLRNRLFKTP…FYNIGSSRLY (73 aa)), are a transit peptide targeting the mitochondrion. Over 74 to 161 (STETPTPSKV…LTRTLKDIGR (88 aa)) the chain is Mitochondrial intermembrane. The chain crosses the membrane as a helical span at residues 162-182 (LVPFSVFVVVPFAELLLPIAV). Residues 183–473 (KLFPNLLPST…ESNIPKNERK (291 aa)) lie on the Mitochondrial matrix side of the membrane. One can recognise a Letm1 RBD domain in the interval 205-398 (QLRKTRNEVS…LQDTLASIPD (194 aa)). The segment at 430 to 473 (EEEAEHVAEHPDLAKKQTEENKATSKPAVSAKSPESNIPKNERK) is disordered. Residues 434–452 (EHVAEHPDLAKKQTEENKA) are compositionally biased toward basic and acidic residues. The span at 462-473 (SPESNIPKNERK) shows a compositional bias: polar residues.

The protein localises to the mitochondrion inner membrane. Its function is as follows. Involved in mitochondrial potassium homeostasis through the mitochondrial K(+)/H(+) exchange regulation. This chain is LETM1 domain-containing protein mdm28, mitochondrial (mdm28), found in Schizosaccharomyces pombe (strain 972 / ATCC 24843) (Fission yeast).